We begin with the raw amino-acid sequence, 262 residues long: Small ribosomal subunit protein eS4C (262 aa).

Positions 42 to 105 (LPLIVFLRNR…GEHFRLVYDI (64 aa)) constitute an S4 RNA-binding domain. Position 194 is a phosphothreonine (threonine 194).

This sequence belongs to the eukaryotic ribosomal protein eS4 family. In terms of assembly, component of the small ribosomal subunit (SSU). Mature yeast ribosomes consist of a small (40S) and a large (60S) subunit. The 40S small subunit contains 1 molecule of ribosomal RNA (18S rRNA) and at least 33 different proteins. The large 60S subunit contains 3 rRNA molecules (25S, 5.8S and 5S rRNA) and at least 46 different proteins.

The protein resides in the cytoplasm. In terms of biological role, component of the ribosome, a large ribonucleoprotein complex responsible for the synthesis of proteins in the cell. The small ribosomal subunit (SSU) binds messenger RNAs (mRNAs) and translates the encoded message by selecting cognate aminoacyl-transfer RNA (tRNA) molecules. The large subunit (LSU) contains the ribosomal catalytic site termed the peptidyl transferase center (PTC), which catalyzes the formation of peptide bonds, thereby polymerizing the amino acids delivered by tRNAs into a polypeptide chain. The nascent polypeptides leave the ribosome through a tunnel in the LSU and interact with protein factors that function in enzymatic processing, targeting, and the membrane insertion of nascent chains at the exit of the ribosomal tunnel. This Schizosaccharomyces pombe (strain 972 / ATCC 24843) (Fission yeast) protein is Small ribosomal subunit protein eS4C (rps403).